The chain runs to 1526 residues: High affinity cGMP-specific 3',5'-cyclic phosphodiesterase 9A (1526 aa).

Positions 1-43 are enriched in low complexity; sequence MYQDSGCSSSSSRRGSSSAAAATSTAATAAETAAAAAATTTSS. Disordered regions lie at residues 1-48, 266-348, and 393-476; these read MYQD…DEET, SSRS…SGTA, and RHHH…ASDC. Basic and acidic residues-rich tracts occupy residues 270–282 and 305–314; these read RSSELEDDHHEQD and EHPSEKPERT. Composition is skewed to low complexity over residues 324–348 and 401–440; these read IAVTTTTTATVRRKSSSSSTISGTA and QQHQQQQRITNNNNNNNNCNSIQNNNNMSNPAATAAATAT. Positions 441–462 are enriched in polar residues; sequence PSVEQPATSGTTNIHLQPTSLP. The region spanning 664–985 is the PDEase domain; it reads VKRRFLEICD…EYYRRLNDAQ (322 aa). His740 (proton donor) is an active-site residue. 740 to 744 is a 3',5'-cyclic GMP binding site; sequence HNFRH. 4 residues coordinate Zn(2+): His744, His780, Asp781, and Asp890. Positions 781 and 890 each coordinate 3',5'-cyclic GMP. Asp781 is a Mg(2+) binding site. 5 disordered regions span residues 986 to 1170, 1265 to 1284, 1314 to 1351, 1372 to 1406, and 1469 to 1496; these read TKTR…SSGG, TEADSDGEGDGNGREDKKIP, SNGSTRSSASSGRGGSGVPGGSGGSGMPGPSAGSGSSW, RFGSTRSSPCPGSNSSSGRTNNNANGLGENQDGLG, and RYSSNDSSRHPSNNTLQSAGGGAGLTTG. Over residues 993 to 1005 the composition is skewed to low complexity; the sequence is ADSNTSATSDSNS. Residues 1033 to 1057 are compositionally biased toward gly residues; that stretch reads NSQGSGGGGGGGGGGGAGGGTGSGC. Polar residues predominate over residues 1065–1093; that stretch reads VSPQMPRSGSGISVKSRRSIPSQKSASRT. The segment covering 1125–1136 has biased composition (basic and acidic residues); sequence VAEKTSKFKVDT. The span at 1139-1148 shows a compositional bias: low complexity; sequence SSNRSKSSHS. Low complexity predominate over residues 1314–1324; the sequence is SNGSTRSSASS. Positions 1325 to 1340 are enriched in gly residues; it reads GRGGSGVPGGSGGSGM. Composition is skewed to low complexity over residues 1341 to 1350 and 1375 to 1397; these read PGPSAGSGSS and STRSSPCPGSNSSSGRTNNNANG. Residues 1470 to 1486 show a composition bias toward polar residues; it reads YSSNDSSRHPSNNTLQS.

It belongs to the cyclic nucleotide phosphodiesterase family. PDE9 subfamily. Zn(2+) serves as cofactor. The cofactor is Mg(2+). In terms of tissue distribution, expressed in Malpighian tubules and adult fly head.

It carries out the reaction 3',5'-cyclic GMP + H2O = GMP + H(+). Its pathway is purine metabolism; 3',5'-cyclic GMP degradation; GMP from 3',5'-cyclic GMP: step 1/1. Specifically hydrolyzes the second messenger cGMP, which is a key regulator of many important physiological processes. Highly specific: compared to other members of the cyclic nucleotide phosphodiesterase family, has the highest affinity and selectivity for cGMP. In Drosophila melanogaster (Fruit fly), this protein is High affinity cGMP-specific 3',5'-cyclic phosphodiesterase 9A.